Reading from the N-terminus, the 263-residue chain is Tryptophan synthase alpha chain (263 aa).

Residues Glu-47 and Asp-58 each act as proton acceptor in the active site.

This sequence belongs to the TrpA family. As to quaternary structure, tetramer of two alpha and two beta chains.

The protein localises to the plastid. The protein resides in the chloroplast. The enzyme catalyses (1S,2R)-1-C-(indol-3-yl)glycerol 3-phosphate + L-serine = D-glyceraldehyde 3-phosphate + L-tryptophan + H2O. The protein operates within amino-acid biosynthesis; L-tryptophan biosynthesis; L-tryptophan from chorismate: step 5/5. Functionally, the alpha subunit is responsible for the aldol cleavage of indoleglycerol phosphate to indole and glyceraldehyde 3-phosphate. The protein is Tryptophan synthase alpha chain of Antithamnion sp. (Red alga).